The sequence spans 684 residues: MTAVASSAPAAPIRVPAGTTAGAAVREADLPGRGAPDAIVVVRDAEGRLRDLSWTPDTDVEVTPVAADTEEGRSVIRHSCAHVLAQAVQELFPQAKLGIGPPITDGFYYDFDVEEPFTPEDLERLEKRMRQIIKDGQLFSRRVYESKDAAREELANEPYKLELVDDKSGDPDVMEVGGDELTAYDNLNARTKERVWGDLCRGPHIPTTRYIPAFKLTRSSAAYWRGDQNNASLQRIYGTAWESQEALDRHLELIEEAQRRDHRKLGVELDLFSFPDELGSGLPVFHPRGGVVRRELEDYSRRKHLEAGYEFVNTPHITKEQLYVTSGHLEWYADGMFPAMHIDAEYDADGQVRKPGQNYYLKPMNCPMHHLIFRSRGRSYRELPLRLFEFGSVYRYEKSGVVHGLTRVRGMTQDDAHIYTTREQMRDELTRLLEFVLSLLKDYGLDDYYLELSTKDPEKYVGSDEIWEEATETLREVAEASGLDLVPDPGGAAFYGPKISVQVKDALGRSWQMSTIQLDFNMPDRFELEYTAADGSRRRPVLIHRALFGSIERFFGVLTEHYAGAFPAWLAPVQVVGIPVADAHTPYLEEVAAQLKSRGVRVEVDSSDDRMAKKIVNHTNMKVPFMLLAGDKDAEAGAVSFRFGDRTQINGVPRDEAVEMIVRWIADRINEVPTAETVKAGAAK.

A TGS domain is found at 1–66; the sequence is MTAVASSAPA…DTDVEVTPVA (66 aa). A catalytic region spans residues 261-567; the sequence is DHRKLGVELD…LTEHYAGAFP (307 aa). Zn(2+) is bound by residues cysteine 366, histidine 417, and histidine 544.

The protein belongs to the class-II aminoacyl-tRNA synthetase family. As to quaternary structure, homodimer. Zn(2+) serves as cofactor.

It localises to the cytoplasm. The enzyme catalyses tRNA(Thr) + L-threonine + ATP = L-threonyl-tRNA(Thr) + AMP + diphosphate + H(+). Functionally, catalyzes the attachment of threonine to tRNA(Thr) in a two-step reaction: L-threonine is first activated by ATP to form Thr-AMP and then transferred to the acceptor end of tRNA(Thr). Also edits incorrectly charged L-seryl-tRNA(Thr). In Mycolicibacterium smegmatis (strain ATCC 700084 / mc(2)155) (Mycobacterium smegmatis), this protein is Threonine--tRNA ligase.